Consider the following 872-residue polypeptide: G-type lectin S-receptor-like serine/threonine-protein kinase At5g35370 (872 aa).

An N-terminal signal peptide occupies residues 1-26 (MKSTFLLLLLLLSLNLLFVFVSCASS). At 27 to 443 (IEFVYPNFTA…NNNRGGSSFP (417 aa)) the chain is on the extracellular side. N-linked (GlcNAc...) asparagine glycosylation is found at Asn33, Asn148, and Asn239. The region spanning 35–156 (TASNLRFVDS…LNVSLWESFD (122 aa)) is the Bulb-type lectin domain. In terms of domain architecture, EGF-like; atypical spans 283 to 322 (PMDSCQIPFVCGKLGLCNLDNASENQSCSCPDEMRMDAGK). 2 disulfides stabilise this stretch: Cys287-Cys299 and Cys293-Cys310. Residues Asn303, Asn307, Asn342, Asn379, and Asn389 are each glycosylated (N-linked (GlcNAc...) asparagine). The region spanning 338 to 423 (CEARNISYLE…HDLIGYVKLS (86 aa)) is the PAN domain. Disulfide bonds link Cys372-Cys394 and Cys376-Cys382. The chain crosses the membrane as a helical span at residues 444 to 464 (VIALVLLPCSGFFLLIALGLL). Over 465–872 (WWRRCAVMRY…IASQEVSGPR (408 aa)) the chain is Cytoplasmic. In terms of domain architecture, Protein kinase spans 515-814 (ENFKMQIGSG…GSIPLGNPRM (300 aa)). Residues 521–529 (IGSGGFGSV) and Lys543 contribute to the ATP site. The caM-binding stretch occupies residues 603–620 (GNGPVLEWQERFDIALGT). Asp639 (proton acceptor) is an active-site residue. A Phosphoserine modification is found at Ser656. Residue Thr673 is modified to Phosphothreonine. Phosphoserine occurs at positions 716 and 859. The segment at 836 to 872 (QNGESETMVFHRRESSNSGGSRQSASYIASQEVSGPR) is disordered. A compositionally biased stretch (low complexity) spans 851–861 (SNSGGSRQSAS). Polar residues predominate over residues 862-872 (YIASQEVSGPR).

The protein belongs to the protein kinase superfamily. Ser/Thr protein kinase family.

It is found in the cell membrane. The catalysed reaction is L-seryl-[protein] + ATP = O-phospho-L-seryl-[protein] + ADP + H(+). It carries out the reaction L-threonyl-[protein] + ATP = O-phospho-L-threonyl-[protein] + ADP + H(+). The polypeptide is G-type lectin S-receptor-like serine/threonine-protein kinase At5g35370 (Arabidopsis thaliana (Mouse-ear cress)).